We begin with the raw amino-acid sequence, 507 residues long: ATP synthase subunit alpha, chloroplastic (507 aa).

Residue 170–177 coordinates ATP; that stretch reads GDRQTGKT.

Belongs to the ATPase alpha/beta chains family. F-type ATPases have 2 components, CF(1) - the catalytic core - and CF(0) - the membrane proton channel. CF(1) has five subunits: alpha(3), beta(3), gamma(1), delta(1), epsilon(1). CF(0) has four main subunits: a, b, b' and c.

The protein localises to the plastid. It localises to the chloroplast thylakoid membrane. It catalyses the reaction ATP + H2O + 4 H(+)(in) = ADP + phosphate + 5 H(+)(out). Functionally, produces ATP from ADP in the presence of a proton gradient across the membrane. The alpha chain is a regulatory subunit. In Nicotiana tabacum (Common tobacco), this protein is ATP synthase subunit alpha, chloroplastic.